The primary structure comprises 71 residues: DNA-directed RNA polymerase subunit omega (71 aa).

It belongs to the RNA polymerase subunit omega family. In terms of assembly, the RNAP catalytic core consists of 2 alpha, 1 beta/beta' and 1 omega subunit. When a sigma factor is associated with the core the holoenzyme is formed, which can initiate transcription.

It catalyses the reaction RNA(n) + a ribonucleoside 5'-triphosphate = RNA(n+1) + diphosphate. Its function is as follows. Promotes RNA polymerase assembly. Latches the N- and C-terminal regions of the beta' subunit thereby facilitating its interaction with the beta and alpha subunits. The sequence is that of DNA-directed RNA polymerase subunit omega from Wolinella succinogenes (strain ATCC 29543 / DSM 1740 / CCUG 13145 / JCM 31913 / LMG 7466 / NCTC 11488 / FDC 602W) (Vibrio succinogenes).